The following is a 464-amino-acid chain: Protein FAM90A20 (464 aa).

6 disordered regions span residues 16-42 (RAQT…DPRL), 71-213 (ATLG…IPRP), 228-247 (PTHS…ASKT), 254-273 (VRTQ…CPSA), 309-389 (RLGP…HDGA), and 418-437 (EKPG…SEAP). Basic and acidic residues-rich tracts occupy residues 74–83 (GKKEGKENLK) and 97–114 (NKDK…DPQR). Residues 180-197 (LASLSPLRKASLSSSSSL) are compositionally biased toward low complexity.

The protein belongs to the FAM90 family.

The protein is Protein FAM90A20 of Homo sapiens (Human).